A 360-amino-acid chain; its full sequence is Photosystem II protein D1 (360 aa).

The next 3 helical transmembrane spans lie at 29 to 46 (YIGW…TATS), 118 to 133 (HFLT…EWEL), and 142 to 156 (WISV…AAAA). Histidine 118 lines the chlorophyll a pocket. Residue tyrosine 126 coordinates pheophytin a. Aspartate 170 and glutamate 189 together coordinate [CaMn4O5] cluster. A helical membrane pass occupies residues 197-218 (FHQLGVAGVFGGSLFSAMHGSL). Residue histidine 198 coordinates chlorophyll a. A quinone-binding positions include histidine 215 and 264-265 (SF). Histidine 215 lines the Fe cation pocket. Histidine 272 is a binding site for Fe cation. Residues 274-288 (FLGLWPVVGIWLTAL) traverse the membrane as a helical segment. Residues histidine 332, glutamate 333, aspartate 342, and alanine 344 each contribute to the [CaMn4O5] cluster site. A propeptide spanning residues 345–360 (SGESLPVALTAPAVNG) is cleaved from the precursor.

Belongs to the reaction center PufL/M/PsbA/D family. As to quaternary structure, PSII is composed of 1 copy each of membrane proteins PsbA, PsbB, PsbC, PsbD, PsbE, PsbF, PsbH, PsbI, PsbJ, PsbK, PsbL, PsbM, PsbT, PsbX, PsbY, PsbZ, Psb30/Ycf12, at least 3 peripheral proteins of the oxygen-evolving complex and a large number of cofactors. It forms dimeric complexes. The cofactor is The D1/D2 heterodimer binds P680, chlorophylls that are the primary electron donor of PSII, and subsequent electron acceptors. It shares a non-heme iron and each subunit binds pheophytin, quinone, additional chlorophylls, carotenoids and lipids. D1 provides most of the ligands for the Mn4-Ca-O5 cluster of the oxygen-evolving complex (OEC). There is also a Cl(-1) ion associated with D1 and D2, which is required for oxygen evolution. The PSII complex binds additional chlorophylls, carotenoids and specific lipids.. In terms of processing, tyr-161 forms a radical intermediate that is referred to as redox-active TyrZ, YZ or Y-Z. C-terminally processed by CTPA; processing is essential to allow assembly of the oxygen-evolving complex and thus photosynthetic growth.

The protein resides in the plastid. Its subcellular location is the chloroplast thylakoid membrane. The enzyme catalyses 2 a plastoquinone + 4 hnu + 2 H2O = 2 a plastoquinol + O2. Its function is as follows. Photosystem II (PSII) is a light-driven water:plastoquinone oxidoreductase that uses light energy to abstract electrons from H(2)O, generating O(2) and a proton gradient subsequently used for ATP formation. It consists of a core antenna complex that captures photons, and an electron transfer chain that converts photonic excitation into a charge separation. The D1/D2 (PsbA/PsbD) reaction center heterodimer binds P680, the primary electron donor of PSII as well as several subsequent electron acceptors. In Porphyra purpurea (Red seaweed), this protein is Photosystem II protein D1.